Here is a 345-residue protein sequence, read N- to C-terminus: Membrane progestin receptor alpha (345 aa).

Over 1–74 the chain is Cytoplasmic; that stretch reads MAMAVAQKFN…FQRHNEAVNV (74 aa). A helical membrane pass occupies residues 75-95; the sequence is WTHLLAALALLLRLIGLAASV. Over 96-102 the chain is Extracellular; that stretch reads DFREDPH. The chain crosses the membrane as a helical span at residues 103–123; it reads ALPLFFIVLASFTYLSFSAVA. Topologically, residues 124 to 136 are cytoplasmic; it reads HLLQAKSEFWHYS. A helical membrane pass occupies residues 137 to 157; the sequence is FFFLDYVGVAVYQFGSALAHF. The Extracellular segment spans residues 158–168; it reads YYAIEPSWHDK. The helical transmembrane segment at 169-189 threads the bilayer; that stretch reads VQAIFLPTAAFLAWLSCAGSC. The Cytoplasmic portion of the chain corresponds to 190–243; it reads YNKYSQKPGLLGRIFQEAPSALAYVLDISPVLHRIIVSPLPAEEDPALLYHKCQ. Residues 244–264 form a helical membrane-spanning segment; it reads VVFFLLAAAFFSTVMPESWFP. Over 265-268 the chain is Extracellular; the sequence is GSCH. A helical membrane pass occupies residues 269–289; sequence IFGQGHQVFHVFLVLCTLAQL. Residues 290–315 lie on the Cytoplasmic side of the membrane; it reads EAVTLDYQARRGIYEPLHARWPHNFS. Residues 316-336 form a helical membrane-spanning segment; that stretch reads GLFLLTVASSSLTALLLSQLV. Topologically, residues 337–345 are extracellular; it reads RRKLHQKTK.

This sequence belongs to the ADIPOR family. Detected in most adult tissues. Higher expression found in white fat and liver than brown fat and skeletal muscle.

Its subcellular location is the cell membrane. Plasma membrane progesterone (P4) receptor coupled to G proteins. Seems to act through a G(i) mediated pathway. May be involved in oocyte maturation. Involved in neurosteroid inhibition of apoptosis. Also binds dehydroepiandrosterone (DHEA), pregnanolone, pregnenolone and allopregnanolone. In Mus musculus (Mouse), this protein is Membrane progestin receptor alpha.